The following is a 224-amino-acid chain: MKILYSFLLLPFFSCAFSVDSMIKFSGEDDFFLVNGNSKEREYIYVTLSELISEKNNRRDEIFYNADNVPLWPISAEPADIIISSGEQVKIKINKNYTPVGGDRIFGINFSPDTLNDNDRNQYNIPFGYKAWLIVPGTESESGTVDVSKVSEKNKYIIKNNTNKVMDVWADYCGSYNNNKCRVQLITRPYSEKKIEIDSNNNPIEFTFSIYIGRERKLIKRKIL.

An N-terminal signal peptide occupies residues 1-16; that stretch reads MKILYSFLLLPFFSCA.

This is an uncharacterized protein from Escherichia coli.